A 433-amino-acid polypeptide reads, in one-letter code: Probable exopolygalacturonase X (433 aa).

The signal sequence occupies residues 1-21 (MKLTQATTLLLSLGLSLPVEG). The interval 30-54 (VGPKPPFRPLPASTPRNKTCQVQSN) is disordered. The span at 43–54 (TPRNKTCQVQSN) shows a compositional bias: polar residues. Residues asparagine 46, asparagine 127, and asparagine 197 are each glycosylated (N-linked (GlcNAc...) asparagine). A PbH1 1 repeat occupies 229–250 (SSNIVIQNSVINNGDDCVSFKP). Aspartate 243 serves as the catalytic Proton donor. A disulfide bridge connects residues cysteine 245 and cysteine 262. N-linked (GlcNAc...) asparagine glycans are attached at residues asparagine 251 and asparagine 263. One copy of the PbH1 2 repeat lies at 252 to 272 (STEILVQNLHCNGSHGISVGS). The active site involves histidine 266. Asparagine 290, asparagine 295, asparagine 327, asparagine 352, and asparagine 362 each carry an N-linked (GlcNAc...) asparagine glycan. The PbH1 3 repeat unit spans residues 325-346 (VQNITYDKMYIENVDWAIEVTQ). The PbH1 4 repeat unit spans residues 360-403 (PSNLTISDVYFNDLTGVTSGKNDPNVGTIICSSPDVCSGIHATN). An intrachain disulfide couples cysteine 390 to cysteine 396.

The protein belongs to the glycosyl hydrolase 28 family.

It is found in the secreted. It carries out the reaction [(1-&gt;4)-alpha-D-galacturonosyl](n) + H2O = alpha-D-galacturonate + [(1-&gt;4)-alpha-D-galacturonosyl](n-1). Specific in hydrolyzing the terminal glycosidic bond of polygalacturonic acid and oligogalacturonates. This Aspergillus flavus (strain ATCC 200026 / FGSC A1120 / IAM 13836 / NRRL 3357 / JCM 12722 / SRRC 167) protein is Probable exopolygalacturonase X (pgaX).